The primary structure comprises 330 residues: DNA-directed RNA polymerase subunit alpha (330 aa).

Residues 1-236 (MQGSVTEFLK…EQLDAFVDLR (236 aa)) are alpha N-terminal domain (alpha-NTD). The segment at 250 to 330 (FDPILLRPVD…NWPPASIAED (81 aa)) is alpha C-terminal domain (alpha-CTD).

This sequence belongs to the RNA polymerase alpha chain family. As to quaternary structure, homodimer. The RNAP catalytic core consists of 2 alpha, 1 beta, 1 beta' and 1 omega subunit. When a sigma factor is associated with the core the holoenzyme is formed, which can initiate transcription.

It carries out the reaction RNA(n) + a ribonucleoside 5'-triphosphate = RNA(n+1) + diphosphate. In terms of biological role, DNA-dependent RNA polymerase catalyzes the transcription of DNA into RNA using the four ribonucleoside triphosphates as substrates. This chain is DNA-directed RNA polymerase subunit alpha, found in Vibrio atlanticus (strain LGP32) (Vibrio splendidus (strain Mel32)).